Consider the following 881-residue polypeptide: Heat shock protein 70 homolog LHS1 (881 aa).

Residues 1 to 20 (MRNVLRLLFLTAFVAIGSLA) form the signal peptide. N128, N458, N474, N481, N489, N527, and N844 each carry an N-linked (GlcNAc...) asparagine glycan. Residues 833-844 (RKLEQEKSRNNN) are compositionally biased toward basic and acidic residues. The disordered stretch occupies residues 833–881 (RKLEQEKSRNNNETESTVINSADDKTTIVNDKTTESNPSSEEDILHDEL). Residues 859–871 (TIVNDKTTESNPS) show a composition bias toward polar residues. Residues 872–881 (SEEDILHDEL) are compositionally biased toward acidic residues. The Prevents secretion from ER signature appears at 878–881 (HDEL).

Belongs to the heat shock protein 70 family. As to quaternary structure, interacts with the heat shock protein 70 (HSP70) KAR2, and this stimulates nucleotide exchange on KAR2. KAR2 in turn acts to stimulate the ATPase activity of LHS1. N-glycosylated.

It is found in the endoplasmic reticulum lumen. The catalysed reaction is ATP + H2O = ADP + phosphate + H(+). Its function is as follows. Chaperone required for protein translocation and folding in the endoplasmic reticulum. The protein is Heat shock protein 70 homolog LHS1 (LHS1) of Saccharomyces cerevisiae (strain ATCC 204508 / S288c) (Baker's yeast).